We begin with the raw amino-acid sequence, 535 residues long: Intercellular adhesion molecule 1 (535 aa).

Positions 1 to 27 are cleaved as a signal peptide; it reads MALGAAPAAQLALLALLGTLLPGPGGA. Topologically, residues 28–480 are extracellular; it reads GISIHPSKAI…LNVLHGQNIL (453 aa). One can recognise an Ig-like C2-type 1 domain in the interval 41–102; it reads GDSLTVNCSN…SNCHKEQTIA (62 aa). Asn47 is a glycosylation site (N-linked (GlcNAc...) asparagine). 2 cysteine pairs are disulfide-bonded: Cys48–Cys91 and Cys52–Cys95. N-linked (GlcNAc...) asparagine glycosylation is found at Asn105 and Asn131. The Ig-like C2-type 2 domain maps to 127 to 193; the sequence is GEELNLSCLV…FSCRWELDLR (67 aa). Cys134 and Cys186 are disulfide-bonded. Residues 151–153 carry the Cell attachment site; atypical motif; that stretch reads RGE. N-linked (GlcNAc...) asparagine glycosylation is found at Asn183, Asn202, Asn236, Asn262, Asn302, Asn341, Asn357, Asn366, Asn404, and Asn428. The Ig-like C2-type 3 domain maps to 230–295; that stretch reads GSRWPVNCTL…LKCSVTLGEV (66 aa). A disulfide bridge links Cys237 with Cys288. Residues 323–376 form the Ig-like C2-type 4 domain; that stretch reads WTTVTVECVTRDGAVVKLNGTSAVPPGPRAQLKLNASASDHRSNFSCSAALEIA. 4 disulfides stabilise this stretch: Cys330/Cys369, Cys401/Cys417, Cys417/Cys456, and Cys429/Cys456. Positions 410-463 constitute an Ig-like C2-type 5 domain; it reads GSEQTLKCEAQGNPIPKLNCSRKGDGASLPIGDLRPVRREVAGTYLCRATSARG. A helical transmembrane segment spans residues 481–503; that stretch reads DIVIPVVAVTLILGALGTAGYVY. Topologically, residues 504-535 are cytoplasmic; it reads NYQRKIQKYELQKARKAQEEAALKLNAQSTPP. Phosphothreonine is present on Thr533.

Belongs to the immunoglobulin superfamily. ICAM family. Homodimer. Interacts with MUC1 and promotes cell aggregation in epithelial cells. Interacts with ARHGEF26/SGEF. Interacts (on T cell side) with CD81, CD247 and CD9 at immunological synapses between antigen-presenting cells and T cells. Post-translationally, monoubiquitinated, which is promoted by MARCH9 and leads to endocytosis.

The protein resides in the membrane. In terms of biological role, ICAM proteins are ligands for the leukocyte adhesion protein LFA-1 (integrin alpha-L/beta-2). During leukocyte trans-endothelial migration, ICAM1 engagement promotes the assembly of endothelial apical cups through ARHGEF26/SGEF and RHOG activation. This Bos taurus (Bovine) protein is Intercellular adhesion molecule 1 (ICAM1).